Reading from the N-terminus, the 109-residue chain is Sperm-specific class P protein 9/11 (109 aa).

The MSP domain occupies 2-109 (SLTADPPACT…TVTIPMSATA (108 aa)).

In terms of tissue distribution, expressed at higher level in testis.

This chain is Sperm-specific class P protein 9/11 (ssp-9), found in Caenorhabditis elegans.